Here is a 239-residue protein sequence, read N- to C-terminus: Uridylate kinase (239 aa).

13–16 (KISG) serves as a coordination point for ATP. Position 55 (G55) interacts with UMP. The ATP site is built by G56 and R60. UMP-binding positions include D75 and 136 to 143 (LGIPFFTT). 3 residues coordinate ATP: T163, Y169, and D172.

Belongs to the UMP kinase family. In terms of assembly, homohexamer.

It is found in the cytoplasm. It catalyses the reaction UMP + ATP = UDP + ADP. It functions in the pathway pyrimidine metabolism; CTP biosynthesis via de novo pathway; UDP from UMP (UMPK route): step 1/1. Inhibited by UTP. Functionally, catalyzes the reversible phosphorylation of UMP to UDP. This chain is Uridylate kinase, found in Buchnera aphidicola subsp. Cinara cedri (strain Cc).